Reading from the N-terminus, the 155-residue chain is Probable jacalin-related lectin 26 (155 aa).

The next 2 membrane-spanning stretches (helical) occupy residues 26–48 and 127–149; these read AYLY…IAMI and VSFV…VLFL. The region spanning 47–155 is the Jacalin-type lectin domain; that stretch reads MIRAGSVGKK…VLFLMKFKRS (109 aa).

This sequence belongs to the jacalin lectin family.

It is found in the membrane. The polypeptide is Probable jacalin-related lectin 26 (JAL26) (Arabidopsis thaliana (Mouse-ear cress)).